The following is a 156-amino-acid chain: Large ribosomal subunit protein eL24 (156 aa).

Residues 110–129 (KESKAKKQETQAAKKAEKAK) are compositionally biased toward basic and acidic residues. Positions 110-156 (KESKAKKQETQAAKKAEKAKNAANPKARVTSKQGAKGAPVKVAAKSR) are disordered. Residues 130–156 (NAANPKARVTSKQGAKGAPVKVAAKSR) show a composition bias toward low complexity.

The protein belongs to the eukaryotic ribosomal protein eL24 family. As to quaternary structure, component of the large ribosomal subunit (LSU). Mature N.crassa ribosomes consist of a small (40S) and a large (60S) subunit. The 40S small subunit contains 1 molecule of ribosomal RNA (18S rRNA) and at least 32 different proteins. The large 60S subunit contains 3 rRNA molecules (26S, 5.8S and 5S rRNA) and at least 42 different proteins.

It is found in the cytoplasm. Functionally, component of the ribosome, a large ribonucleoprotein complex responsible for the synthesis of proteins in the cell. The small ribosomal subunit (SSU) binds messenger RNAs (mRNAs) and translates the encoded message by selecting cognate aminoacyl-transfer RNA (tRNA) molecules. The large subunit (LSU) contains the ribosomal catalytic site termed the peptidyl transferase center (PTC), which catalyzes the formation of peptide bonds, thereby polymerizing the amino acids delivered by tRNAs into a polypeptide chain. The nascent polypeptides leave the ribosome through a tunnel in the LSU and interact with protein factors that function in enzymatic processing, targeting, and the membrane insertion of nascent chains at the exit of the ribosomal tunnel. The polypeptide is Large ribosomal subunit protein eL24 (rpl-24) (Neurospora crassa (strain ATCC 24698 / 74-OR23-1A / CBS 708.71 / DSM 1257 / FGSC 987)).